We begin with the raw amino-acid sequence, 477 residues long: MSAEFFSSKREEGSLASGPSFRSNQRKILNLLLERDASFSISSDLPTTPVEKKLFGDSANLSILSGGTPKRCLDLSNLSSGEMSATQLTASADLDETGHLESTGPEQVRLAGMNYRQHLIKCSPAQLFCSTPNALEHGRRKKDAICGSSANKENDNGNLVENEMKHLGSPITTVSKLHKNPELAEDQAEEISDELMEFSLEDQEKAKPPLNWSSLYRSSSLPDSLNSPSLKQVVKFKDSTIPDKLKKKYCSNQKELGKGLGLKKMVSLCDINMTQMLEEDSNQGPLIGDFSKVCALPTVSGKHQDLKYVNPETVAALLSGEFQGLIEKFYIIDCRYPYEYLGGHIQGALNLHSQEELYNFFLKKPIVPWDNQKRIVIVFHCEFSSERGPRMCRSLREEDRTLNQYPALYYPELYILKGGYRDFFPEYMELCEPQSYCPMHHQDHKAELLRCRNQSKAWEGERQLQEQIALLVKDVSP.

The segment at 1-20 (MSAEFFSSKREEGSLASGPS) is disordered. N-acetylserine is present on S2. Phosphoserine is present on residues S20 and S38. T48 carries the post-translational modification Phosphothreonine; by CDK1. A phosphoserine mark is found at S58, S62, and S65. The residue at position 68 (T68) is a Phosphothreonine; by CDK1. Residue S123 is modified to Phosphoserine; by CDK1. S130 carries the phosphoserine modification. At T131 the chain carries Phosphothreonine. Phosphoserine; by CDK1 is present on S169. S192 and S199 each carry phosphoserine; by PLK3. The residue at position 218 (S218) is a Phosphoserine; by CDK1. S220 carries the phosphoserine; by CHEK1, CHEK2, BRSK1, MAPK14 AND MARK3 modification. A Rhodanese domain is found at 325-432 (LIEKFYIIDC…FFPEYMELCE (108 aa)). The active site involves C381. Residue S476 is modified to Phosphoserine.

The protein belongs to the MPI phosphatase family. In terms of assembly, interacts with MAPK14 and 14-3-3 proteins. When phosphorylated on Ser-130 and/or Thr-131, interacts with PLK1. Interacts with MARK3/C-TAK1. Post-translationally, phosphorylated by CHEK1 and MAPK14 at Ser-220. This phosphorylation creates a binding site for 14-3-3 protein and inhibits the phosphatase. Phosphorylated by PLK4. Phosphorylated by PLK1, leading to activate the phosphatase activity. Phosphorylation by PLK3 at Ser-192 promotes nuclear translocation. Ser-199 is a minor phosphorylation site. Phosphorylation by CDK1 occurs at G2 and G2-M transition and leads to increased activity.

It is found in the nucleus. The enzyme catalyses O-phospho-L-tyrosyl-[protein] + H2O = L-tyrosyl-[protein] + phosphate. Its function is as follows. Functions as a dosage-dependent inducer in mitotic control. Tyrosine protein phosphatase required for progression of the cell cycle. When phosphorylated, highly effective in activating G2 cells into prophase. Directly dephosphorylates CDK1 and activates its kinase activity. This is M-phase inducer phosphatase 3 (CDC25C) from Bos taurus (Bovine).